Here is a 567-residue protein sequence, read N- to C-terminus: Methionine--tRNA ligase (567 aa).

The 'HIGH' region motif lies at 11–21; it reads PYVQTVPHLGN. Residues Cys143, Cys146, Cys156, and Cys159 each contribute to the Zn(2+) site. A 'KMSKS' region motif is present at residues 331-335; it reads KFSKS. An ATP-binding site is contributed by Lys334.

Belongs to the class-I aminoacyl-tRNA synthetase family. MetG type 1 subfamily. It depends on Zn(2+) as a cofactor.

It localises to the cytoplasm. It catalyses the reaction tRNA(Met) + L-methionine + ATP = L-methionyl-tRNA(Met) + AMP + diphosphate. Its function is as follows. Is required not only for elongation of protein synthesis but also for the initiation of all mRNA translation through initiator tRNA(fMet) aminoacylation. This chain is Methionine--tRNA ligase, found in Pyrobaculum islandicum (strain DSM 4184 / JCM 9189 / GEO3).